A 229-amino-acid polypeptide reads, in one-letter code: Potassium/proton antiporter CemA (229 aa).

4 helical membrane-spanning segments follow: residues 7–27 (FTPL…SLSL), 114–134 (IICF…LLIL), 154–174 (ILLL…ELMI), and 189–209 (IISG…KYWI).

The protein belongs to the CemA family.

The protein resides in the plastid. It localises to the chloroplast inner membrane. It catalyses the reaction K(+)(in) + H(+)(out) = K(+)(out) + H(+)(in). Contributes to K(+)/H(+) antiport activity by supporting proton efflux to control proton extrusion and homeostasis in chloroplasts in a light-dependent manner to modulate photosynthesis. Prevents excessive induction of non-photochemical quenching (NPQ) under continuous-light conditions. Indirectly promotes efficient inorganic carbon uptake into chloroplasts. The polypeptide is Potassium/proton antiporter CemA (Vitis vinifera (Grape)).